The chain runs to 510 residues: ATP synthase subunit alpha, chloroplastic (510 aa).

Residue 170-177 participates in ATP binding; that stretch reads GDRQTGKT.

Belongs to the ATPase alpha/beta chains family. F-type ATPases have 2 components, CF(1) - the catalytic core - and CF(0) - the membrane proton channel. CF(1) has five subunits: alpha(3), beta(3), gamma(1), delta(1), epsilon(1). CF(0) has four main subunits: a, b, b' and c.

The protein resides in the plastid. It localises to the chloroplast thylakoid membrane. It catalyses the reaction ATP + H2O + 4 H(+)(in) = ADP + phosphate + 5 H(+)(out). Functionally, produces ATP from ADP in the presence of a proton gradient across the membrane. The alpha chain is a regulatory subunit. This chain is ATP synthase subunit alpha, chloroplastic, found in Lotus japonicus (Lotus corniculatus var. japonicus).